We begin with the raw amino-acid sequence, 277 residues long: Sulfur carrier protein FdhD (277 aa).

Cysteine 121 serves as the catalytic Cysteine persulfide intermediate. Residue 260–265 participates in Mo-bis(molybdopterin guanine dinucleotide) binding; the sequence is FCKPGR.

This sequence belongs to the FdhD family.

It localises to the cytoplasm. Functionally, required for formate dehydrogenase (FDH) activity. Acts as a sulfur carrier protein that transfers sulfur from IscS to the molybdenum cofactor prior to its insertion into FDH. This is Sulfur carrier protein FdhD from Shigella flexneri serotype 5b (strain 8401).